We begin with the raw amino-acid sequence, 101 residues long: Small ribosomal subunit protein uS14 (101 aa).

This sequence belongs to the universal ribosomal protein uS14 family. As to quaternary structure, part of the 30S ribosomal subunit. Contacts proteins S3 and S10.

In terms of biological role, binds 16S rRNA, required for the assembly of 30S particles and may also be responsible for determining the conformation of the 16S rRNA at the A site. The chain is Small ribosomal subunit protein uS14 from Phenylobacterium zucineum (strain HLK1).